Consider the following 118-residue polypeptide: Small ribosomal subunit protein uS13 (118 aa).

A disordered region spans residues 94 to 118 (GLPLRGQRTKTNARTRKGRRKGTSS).

The protein belongs to the universal ribosomal protein uS13 family. Part of the 30S ribosomal subunit. Forms a loose heterodimer with protein S19. Forms two bridges to the 50S subunit in the 70S ribosome.

Located at the top of the head of the 30S subunit, it contacts several helices of the 16S rRNA. In the 70S ribosome it contacts the 23S rRNA (bridge B1a) and protein L5 of the 50S subunit (bridge B1b), connecting the 2 subunits; these bridges are implicated in subunit movement. Contacts the tRNAs in the A and P-sites. The sequence is that of Small ribosomal subunit protein uS13 from Legionella pneumophila (strain Paris).